We begin with the raw amino-acid sequence, 261 residues long: UPF0246 protein Daci_5283 (261 aa).

This sequence belongs to the UPF0246 family.

The protein is UPF0246 protein Daci_5283 of Delftia acidovorans (strain DSM 14801 / SPH-1).